A 620-amino-acid chain; its full sequence is Schwann cell myelin protein (620 aa).

Residues 1–17 (MELLVLTVLLMGTGCIS) form the signal peptide. Topologically, residues 18–516 (APWAAWMPPK…GGLVWAKVGP (499 aa)) are extracellular. The 79-residue stretch at 28–106 (MAALSGTCVQ…RDCTLNIARL (79 aa)) folds into the Ig-like V-type domain. 3 disulfides stabilise this stretch: Cys35-Cys164, Cys40-Cys99, and Cys158-Cys216. Position 117 (Arg117) interacts with N-acetylneuraminate. Ig-like C2-type domains are found at residues 151 to 233 (GSEA…DVGL), 239 to 322 (PQVV…LRVA), 325 to 407 (PRAP…FNIS), and 414 to 495 (VLPA…NRHG). The N-linked (GlcNAc...) asparagine glycan is linked to Asn222. Cys260 and Cys304 form a disulfide bridge. N-linked (GlcNAc...) asparagine glycosylation is found at Asn314 and Asn331. Cys346 and Cys391 are oxidised to a cystine. An N-linked (GlcNAc...) asparagine glycan is attached at Asn405. 2 disulfide bridges follow: Cys420-Cys429 and Cys431-Cys488. Residue Asn449 is glycosylated (N-linked (GlcNAc...) asparagine). The helical transmembrane segment at 517-536 (VGAVVAFAIVIAVVCYLSQS) threads the bilayer. At 537-620 (RRKKGAGSPE…PPEYAEIRVK (84 aa)) the chain is on the cytoplasmic side. Disordered stretches follow at residues 539-562 (KKGA…DPDL) and 583-620 (VKEG…IRVK).

Belongs to the immunoglobulin superfamily. SIGLEC (sialic acid binding Ig-like lectin) family. In terms of tissue distribution, exclusively expressed by myelinating and nonmyelinating Schwann cells and oligodendrocytes.

The protein resides in the membrane. This chain is Schwann cell myelin protein (SMP), found in Coturnix japonica (Japanese quail).